Here is a 170-residue protein sequence, read N- to C-terminus: Tubulin polymerization-promoting protein family member 2 (170 aa).

Residues Thr-127–Glu-147 are disordered. The segment covering Thr-129–Lys-139 has biased composition (basic and acidic residues).

The protein belongs to the TPPP family.

It localises to the cytoplasm. The protein resides in the cytosol. Its subcellular location is the cell projection. The protein localises to the cilium. It is found in the flagellum. Functionally, probable regulator of microtubule dynamics required for sperm motility. In contrast to other members of the family, has no microtubule bundling activity. This Macaca fascicularis (Crab-eating macaque) protein is Tubulin polymerization-promoting protein family member 2 (TPPP2).